The chain runs to 525 residues: Peptide chain release factor 3 (525 aa).

One can recognise a tr-type G domain in the interval 8–276 (AMRRTFAIIS…AFVKEAPPPQ (269 aa)). GTP is bound by residues 17-24 (SHPDAGKT), 85-89 (DTPGH), and 139-142 (NKMD).

It belongs to the TRAFAC class translation factor GTPase superfamily. Classic translation factor GTPase family. PrfC subfamily.

The protein resides in the cytoplasm. Its function is as follows. Increases the formation of ribosomal termination complexes and stimulates activities of RF-1 and RF-2. It binds guanine nucleotides and has strong preference for UGA stop codons. It may interact directly with the ribosome. The stimulation of RF-1 and RF-2 is significantly reduced by GTP and GDP, but not by GMP. The polypeptide is Peptide chain release factor 3 (Coxiella burnetii (strain RSA 331 / Henzerling II)).